The chain runs to 469 residues: MNNSEQFLSPRMGRVEQIHFVGIGGAGMCGIAEVLHNQGYRITGSDLGESGTVQRLRSLGIQVYIGHRLENIKGADVVVRSSAVDFNNPEIVAARELMIPVIPRAAMLAELMRFRHGIAIAGTHGKTTTTSLVSSLLAEGGLDPSFVIGGKLNSCGANAQLGKSAYFVVEADESDASFLFLKPMMAVVTNIDADHMDTYEGDFEKLRTTFLEFLHHLPFYGLAVVCLEDEEICRILPAIQRPTLTYGFKEEAHYRAINWTQKGMLSEFVVVRPAPHKQLTIQFQYPGRHNVLNALASIAIATELGVDDDSIVRGLQKFQGVGRRFQMLGEKQFEKGAAIIVDDYGHHPQEILSTIDAFRRVWPERRLVHVFQPHRYTRTQSLHRQFVDALSLSDELLLMDIYAAGETAIPGVTSENLANEIRSRDKRVTIVSEQSLKATLDEFIKDGDVILMQGAGSIGQMAVNLMKNM.

122–128 (GTHGKTT) serves as a coordination point for ATP.

It belongs to the MurCDEF family.

It is found in the cytoplasm. It carries out the reaction UDP-N-acetyl-alpha-D-muramate + L-alanine + ATP = UDP-N-acetyl-alpha-D-muramoyl-L-alanine + ADP + phosphate + H(+). It participates in cell wall biogenesis; peptidoglycan biosynthesis. Cell wall formation. The sequence is that of UDP-N-acetylmuramate--L-alanine ligase from Legionella pneumophila (strain Lens).